The sequence spans 148 residues: Large ribosomal subunit protein bL9 (148 aa).

The protein belongs to the bacterial ribosomal protein bL9 family.

Its function is as follows. Binds to the 23S rRNA. This Pseudomonas aeruginosa (strain LESB58) protein is Large ribosomal subunit protein bL9.